The following is a 233-amino-acid chain: Large ribosomal subunit protein uL1 (233 aa).

Belongs to the universal ribosomal protein uL1 family. As to quaternary structure, part of the 50S ribosomal subunit.

Its function is as follows. Binds directly to 23S rRNA. The L1 stalk is quite mobile in the ribosome, and is involved in E site tRNA release. In terms of biological role, protein L1 is also a translational repressor protein, it controls the translation of the L11 operon by binding to its mRNA. The chain is Large ribosomal subunit protein uL1 from Syntrophotalea carbinolica (strain DSM 2380 / NBRC 103641 / GraBd1) (Pelobacter carbinolicus).